The chain runs to 750 residues: Polyribonucleotide nucleotidyltransferase (750 aa).

The Mg(2+) site is built by Asp523 and Asp529. The region spanning Pro589 to Ile648 is the KH domain. In terms of domain architecture, S1 motif spans Gly660 to Val729.

This sequence belongs to the polyribonucleotide nucleotidyltransferase family. Requires Mg(2+) as cofactor.

It is found in the cytoplasm. The enzyme catalyses RNA(n+1) + phosphate = RNA(n) + a ribonucleoside 5'-diphosphate. In terms of biological role, involved in mRNA degradation. Catalyzes the phosphorolysis of single-stranded polyribonucleotides processively in the 3'- to 5'-direction. This chain is Polyribonucleotide nucleotidyltransferase, found in Saccharopolyspora erythraea (strain ATCC 11635 / DSM 40517 / JCM 4748 / NBRC 13426 / NCIMB 8594 / NRRL 2338).